A 421-amino-acid chain; its full sequence is C2 calcium-dependent domain-containing protein 4C (421 aa).

Disordered regions lie at residues 13–97 (RGSG…AKLA), 119–140 (DWLS…SLPS), 158–228 (HTRR…SPFG), and 250–303 (VSQL…TVHV). The segment covering 215–228 (ESDTGSSAESSPFG) has biased composition (polar residues). Phosphoserine occurs at positions 262, 264, and 273. One can recognise a C2 domain in the interval 305-421 (PRGSVRLLAE…LPLTSLLPFL (117 aa)).

Belongs to the C2CD4 family.

This Homo sapiens (Human) protein is C2 calcium-dependent domain-containing protein 4C (C2CD4C).